Here is a 193-residue protein sequence, read N- to C-terminus: NADH-quinone oxidoreductase subunit B (193 aa).

The [4Fe-4S] cluster site is built by C72, C73, C137, and C167.

The protein belongs to the complex I 20 kDa subunit family. NDH-1 is composed of 14 different subunits. Subunits NuoB, C, D, E, F, and G constitute the peripheral sector of the complex. Requires [4Fe-4S] cluster as cofactor.

The protein resides in the cell inner membrane. It catalyses the reaction a quinone + NADH + 5 H(+)(in) = a quinol + NAD(+) + 4 H(+)(out). In terms of biological role, NDH-1 shuttles electrons from NADH, via FMN and iron-sulfur (Fe-S) centers, to quinones in the respiratory chain. Couples the redox reaction to proton translocation (for every two electrons transferred, four hydrogen ions are translocated across the cytoplasmic membrane), and thus conserves the redox energy in a proton gradient. The polypeptide is NADH-quinone oxidoreductase subunit B (Brucella abortus (strain S19)).